Here is a 306-residue protein sequence, read N- to C-terminus: Lipid A biosynthesis lauroyltransferase (306 aa).

The helical transmembrane segment at 17 to 37 threads the bilayer; it reads WLTWLGIGVLWLVVQLPYPVI. The HXXXXD motif motif lies at 132–137; that stretch reads HFLTLE.

The protein belongs to the LpxL/LpxM/LpxP family. In terms of assembly, monomer.

It localises to the cell inner membrane. It catalyses the reaction dodecanoyl-[ACP] + alpha-Kdo-(2-&gt;4)-alpha-Kdo-(2-&gt;6)-lipid IVA (E. coli) = alpha-Kdo-(2-&gt;4)-alpha-Kdo-(2-&gt;6)-(dodecanoyl)-lipid IVA (E. coli) + holo-[ACP]. The protein operates within glycolipid biosynthesis; KDO(2)-lipid A biosynthesis; KDO(2)-lipid A from CMP-3-deoxy-D-manno-octulosonate and lipid IV(A): step 3/4. Its pathway is bacterial outer membrane biogenesis; lipopolysaccharide biosynthesis. Catalyzes the transfer of laurate from lauroyl-[acyl-carrier-protein] (ACP) to Kdo(2)-lipid IV(A) to form Kdo(2)-(lauroyl)-lipid IV(A). Has 10 fold selectivity for lauroyl-ACP over myristoyl-ACP. In vitro, can also catalyze a slow second acylation reaction leading to the formation of Kdo(2)-(dilauroyl)-lipid IV(A). In Escherichia coli (strain K12), this protein is Lipid A biosynthesis lauroyltransferase.